The sequence spans 307 residues: Putative oxidoreductase YceM (307 aa).

Belongs to the Gfo/Idh/MocA family.

This is Putative oxidoreductase YceM (yceM) from Salmonella typhimurium (strain LT2 / SGSC1412 / ATCC 700720).